The primary structure comprises 205 residues: Casparian strip membrane protein 4 (205 aa).

At 1–58 (MDIEKTGSRREEEEPIVQKPKLEKGKGKAHVFAPPMNYSRIMEKHKQEKVSMAGWKRG) the chain is on the cytoplasmic side. The helical transmembrane segment at 59 to 79 (VAIFDFVLRLIAAITAMAAAA) threads the bilayer. The Extracellular segment spans residues 80-109 (KMATTEETLPFFTQFLQFSADYTDLPTLSS). Residues 110-130 (FVIVNSIVGGYLTLSLPFSIV) traverse the membrane as a helical segment. At 131–148 (CILRPLAVPPRLFLILCD) the chain is on the cytoplasmic side. The chain crosses the membrane as a helical span at residues 149–169 (TAMMGLTMVAASASAAIVYLA). Over 170–205 (HNGNSSSNWLPVCQQFGDFCKERVAPWWLPLLQRLF) the chain is Extracellular. An N-linked (GlcNAc...) asparagine glycan is attached at asparagine 173.

This sequence belongs to the Casparian strip membrane proteins (CASP) family. As to quaternary structure, homodimer and heterodimers.

The protein localises to the cell membrane. Functionally, regulates membrane-cell wall junctions and localized cell wall deposition. Required for establishment of the Casparian strip membrane domain (CSD) and the subsequent formation of Casparian strips, a cell wall modification of the root endodermis that determines an apoplastic barrier between the intraorganismal apoplasm and the extraorganismal apoplasm and prevents lateral diffusion. The polypeptide is Casparian strip membrane protein 4 (Raphanus sativus (Radish)).